The chain runs to 298 residues: Pheromone-regulated membrane protein 9 (298 aa).

At 1 to 111 the chain is on the cytoplasmic side; that stretch reads MSPQYHFYFV…YWIYEVTRHK (111 aa). Residues 112–132 form a helical membrane-spanning segment; it reads AAVILLVLIVTSILLLVFFYN. The Extracellular segment spans residues 133–137; it reads TEFCV. Residues 138–158 form a helical membrane-spanning segment; the sequence is AFEILLFSFCFPGTCMVVIAF. Over 159–298 the chain is Cytoplasmic; it reads SEPIGDREFK…QEYPGVDEFF (140 aa). The interval 235 to 262 is disordered; it reads SSASNVKDAQSNDETAGTPNEAAESSSF. The tract at residues 297–298 is COPII binding; that stretch reads FF.

The protein belongs to the DUP/COS family. In terms of assembly, interacts with PRM8. Binds to COPII coated vesicles.

Its subcellular location is the cell membrane. In terms of biological role, may be involved in endoplasmic reticulum exit trafficking of proteins. This Saccharomyces cerevisiae (strain ATCC 204508 / S288c) (Baker's yeast) protein is Pheromone-regulated membrane protein 9 (PRM9).